The following is a 156-amino-acid chain: Crossover junction endodeoxyribonuclease RuvC (156 aa).

Catalysis depends on residues D7, E66, and D138. Residues D7, E66, and D138 each coordinate Mg(2+).

Belongs to the RuvC family. In terms of assembly, homodimer which binds Holliday junction (HJ) DNA. The HJ becomes 2-fold symmetrical on binding to RuvC with unstacked arms; it has a different conformation from HJ DNA in complex with RuvA. In the full resolvosome a probable DNA-RuvA(4)-RuvB(12)-RuvC(2) complex forms which resolves the HJ. Mg(2+) serves as cofactor.

Its subcellular location is the cytoplasm. The catalysed reaction is Endonucleolytic cleavage at a junction such as a reciprocal single-stranded crossover between two homologous DNA duplexes (Holliday junction).. Its function is as follows. The RuvA-RuvB-RuvC complex processes Holliday junction (HJ) DNA during genetic recombination and DNA repair. Endonuclease that resolves HJ intermediates. Cleaves cruciform DNA by making single-stranded nicks across the HJ at symmetrical positions within the homologous arms, yielding a 5'-phosphate and a 3'-hydroxyl group; requires a central core of homology in the junction. The consensus cleavage sequence is 5'-(A/T)TT(C/G)-3'. Cleavage occurs on the 3'-side of the TT dinucleotide at the point of strand exchange. HJ branch migration catalyzed by RuvA-RuvB allows RuvC to scan DNA until it finds its consensus sequence, where it cleaves and resolves the cruciform DNA. The polypeptide is Crossover junction endodeoxyribonuclease RuvC (Ehrlichia canis (strain Jake)).